A 139-amino-acid chain; its full sequence is UPF0216 protein MJ1224 (139 aa).

Belongs to the UPF0216 family.

The protein is UPF0216 protein MJ1224 of Methanocaldococcus jannaschii (strain ATCC 43067 / DSM 2661 / JAL-1 / JCM 10045 / NBRC 100440) (Methanococcus jannaschii).